A 211-amino-acid polypeptide reads, in one-letter code: Claudin-7 (211 aa).

Topologically, residues 1-7 (MANSGLQ) are cytoplasmic. Residues 8–28 (LLGFSMAMLGWVGLIASTAIP) form a helical membrane-spanning segment. Residues 29–81 (QWQMSSYAGDNIITAQAMYKGLWMECVTQSTGMMSCKMYDSVLALPAATQATR) lie on the Extracellular side of the membrane. The helical transmembrane segment at 82–102 (ALMIVSLVLGFLAMFVATMGM) threads the bilayer. The Cytoplasmic portion of the chain corresponds to 103-119 (KCTRCGGDDKVKKARIA). Residues 120 to 140 (MTGGIIFIVAGLAALVACSWI) traverse the membrane as a helical segment. At 141–160 (GHQIVTDFYNPLTPMNIKYE) the chain is on the extracellular side. The chain crosses the membrane as a helical span at residues 161–181 (FGPAIFIGWAGSALVLLGGAL). At 182–211 (LSCSCPGSESKAAYRAPRSYPKSNSSKEYV) the chain is on the cytoplasmic side. Residues 210 to 211 (YV) are interactions with TJP1, TJP2 and TJP3.

The protein belongs to the claudin family. As to quaternary structure, directly interacts with TJP1/ZO-1, TJP2/ZO-2 and TJP3/ZO-3. The phosphorylated form interacts with EPCAM. In terms of processing, phosphorylated.

The protein resides in the cell membrane. The protein localises to the basolateral cell membrane. It is found in the cell junction. Its subcellular location is the tight junction. Its function is as follows. Plays a major role in tight junction-specific obliteration of the intercellular space. The polypeptide is Claudin-7 (Cldn7) (Rattus norvegicus (Rat)).